The sequence spans 694 residues: Potassium-transporting ATPase ATP-binding subunit (694 aa).

Helical transmembrane passes span 36–56, 62–82, 218–238, and 249–269; these read VMFVVATVSVLTTVLFIRDLI, LAFSFQINLWLWFTVLFANFA, IALNILLAGMTLIFVLATATI, and IPIIVLVALFVTLIPTTIGAL. Residue Asp306 is the 4-aspartylphosphate intermediate of the active site. ATP-binding positions include Asp343, Glu347, 376–383, and Lys394; that span reads FTAQTRMS. Asp530 and Asp534 together coordinate Mg(2+). 3 helical membrane-spanning segments follow: residues 600–620, 628–648, and 666–686; these read FAIIPAMFLALYPQLGVLNVM, AILSAIIFNALIIIALIPLSL, and LVIYGLGGIIVPFIGIKLIDL.

This sequence belongs to the cation transport ATPase (P-type) (TC 3.A.3) family. Type IA subfamily. As to quaternary structure, the system is composed of three essential subunits: KdpA, KdpB and KdpC.

Its subcellular location is the cell inner membrane. It carries out the reaction K(+)(out) + ATP + H2O = K(+)(in) + ADP + phosphate + H(+). Functionally, part of the high-affinity ATP-driven potassium transport (or Kdp) system, which catalyzes the hydrolysis of ATP coupled with the electrogenic transport of potassium into the cytoplasm. This subunit is responsible for energy coupling to the transport system and for the release of the potassium ions to the cytoplasm. In Agrobacterium fabrum (strain C58 / ATCC 33970) (Agrobacterium tumefaciens (strain C58)), this protein is Potassium-transporting ATPase ATP-binding subunit.